Reading from the N-terminus, the 90-residue chain is Large ribosomal subunit protein bL27 (90 aa).

Residues 1 to 20 (MAHKKAGGSSRNGRDSAGKR) form a disordered region.

The protein belongs to the bacterial ribosomal protein bL27 family.

The polypeptide is Large ribosomal subunit protein bL27 (Rhodopseudomonas palustris (strain BisB18)).